The following is a 417-amino-acid chain: MAEVRNYTFNFGPQHPAAHGVLRLIVEVDGEVIQRIDPHIGLLHRATEKLAESKPYNQTIGYMDRLDYVSMMANEHGYVLAIEKLLGIEPPIRAKYIRTMFDEITRILNHLLWLGAHALDVGAMTVFLYCFREREDLMDCYEAVSGARMHATYYRPGGVYRDLPDSMPKYKPSRWHNEKAVKKMNEAREGSLLDFIWDFTARFPNLIDEYESLLTDNRIWKQRTVGIGVVSAERALQLGFTGPMLRASGVEWDLRKKQPYAAYDRVDFDIPIGREGDCYDRYLVRIEEMRQSNRIIRQCVEWLRKNPGSVMIDDYKIVPPQREVMKRDMEALIHHFKLFTEGYIVPEGEAYAAVEQPKGEFGVYIVSDGANKPYRVKVRAASYPHLAAMNEMCRGHMIADLVAIISSIDIVFGEIDR.

Belongs to the complex I 49 kDa subunit family. NDH-1 is composed of 14 different subunits. Subunits NuoB, C, D, E, F, and G constitute the peripheral sector of the complex.

It is found in the cell inner membrane. The catalysed reaction is a quinone + NADH + 5 H(+)(in) = a quinol + NAD(+) + 4 H(+)(out). Its function is as follows. NDH-1 shuttles electrons from NADH, via FMN and iron-sulfur (Fe-S) centers, to quinones in the respiratory chain. The immediate electron acceptor for the enzyme in this species is believed to be ubiquinone. Couples the redox reaction to proton translocation (for every two electrons transferred, four hydrogen ions are translocated across the cytoplasmic membrane), and thus conserves the redox energy in a proton gradient. In Coxiella burnetii (strain RSA 331 / Henzerling II), this protein is NADH-quinone oxidoreductase subunit D.